Consider the following 467-residue polypeptide: ATP-dependent protease ATPase subunit HslU (467 aa).

ATP-binding positions include Val22 and 64–69 (GVGKTE). The disordered stretch occupies residues 149–192 (QTNNPLESLFGGAIPNFGQNNEDEEEPPTEEIKTKRSEIKRQLE). The segment covering 178-192 (EEIKTKRSEIKRQLE) has biased composition (basic and acidic residues). Residues Asp280, Glu345, and Arg417 each contribute to the ATP site.

This sequence belongs to the ClpX chaperone family. HslU subfamily. As to quaternary structure, a double ring-shaped homohexamer of HslV is capped on each side by a ring-shaped HslU homohexamer. The assembly of the HslU/HslV complex is dependent on binding of ATP.

Its subcellular location is the cytoplasm. Functionally, ATPase subunit of a proteasome-like degradation complex; this subunit has chaperone activity. The binding of ATP and its subsequent hydrolysis by HslU are essential for unfolding of protein substrates subsequently hydrolyzed by HslV. HslU recognizes the N-terminal part of its protein substrates and unfolds these before they are guided to HslV for hydrolysis. This chain is ATP-dependent protease ATPase subunit HslU, found in Staphylococcus aureus (strain Mu3 / ATCC 700698).